Here is a 403-residue protein sequence, read N- to C-terminus: S-adenosylmethionine synthase (403 aa).

An ATP-binding site is contributed by histidine 17. Position 19 (aspartate 19) interacts with Mg(2+). Glutamate 45 lines the K(+) pocket. Residues glutamate 58 and glutamine 104 each contribute to the L-methionine site. Residues 104–114 (QSPDIAQGVDT) form a flexible loop region. ATP is bound by residues 179-181 (DGK), 250-251 (KF), aspartate 259, 265-266 (RK), alanine 282, and lysine 286. Aspartate 259 contributes to the L-methionine binding site. Lysine 290 provides a ligand contact to L-methionine.

It belongs to the AdoMet synthase family. In terms of assembly, homotetramer; dimer of dimers. Mg(2+) is required as a cofactor. It depends on K(+) as a cofactor.

It is found in the cytoplasm. It catalyses the reaction L-methionine + ATP + H2O = S-adenosyl-L-methionine + phosphate + diphosphate. The protein operates within amino-acid biosynthesis; S-adenosyl-L-methionine biosynthesis; S-adenosyl-L-methionine from L-methionine: step 1/1. In terms of biological role, catalyzes the formation of S-adenosylmethionine (AdoMet) from methionine and ATP. The overall synthetic reaction is composed of two sequential steps, AdoMet formation and the subsequent tripolyphosphate hydrolysis which occurs prior to release of AdoMet from the enzyme. In Mycobacterium tuberculosis (strain ATCC 25177 / H37Ra), this protein is S-adenosylmethionine synthase.